Consider the following 193-residue polypeptide: Phosphoheptose isomerase (193 aa).

Positions Leu-37–Gln-193 constitute an SIS domain. Asn-52–Gly-54 is a binding site for substrate. His-61 and Glu-65 together coordinate Zn(2+). Substrate-binding positions include Glu-65, Asn-93–Asp-94, Ser-119–Ser-121, Ser-124, and Gln-172. Residues Gln-172 and His-180 each contribute to the Zn(2+) site.

Belongs to the SIS family. GmhA subfamily. Homotetramer. It depends on Zn(2+) as a cofactor.

The protein localises to the cytoplasm. The catalysed reaction is 2 D-sedoheptulose 7-phosphate = D-glycero-alpha-D-manno-heptose 7-phosphate + D-glycero-beta-D-manno-heptose 7-phosphate. The protein operates within carbohydrate biosynthesis; D-glycero-D-manno-heptose 7-phosphate biosynthesis; D-glycero-alpha-D-manno-heptose 7-phosphate and D-glycero-beta-D-manno-heptose 7-phosphate from sedoheptulose 7-phosphate: step 1/1. Its function is as follows. Catalyzes the isomerization of sedoheptulose 7-phosphate in D-glycero-D-manno-heptose 7-phosphate. The protein is Phosphoheptose isomerase of Pectobacterium atrosepticum (strain SCRI 1043 / ATCC BAA-672) (Erwinia carotovora subsp. atroseptica).